Here is a 275-residue protein sequence, read N- to C-terminus: 2,3,4,5-tetrahydropyridine-2,6-dicarboxylate N-succinyltransferase (275 aa).

Residues arginine 106 and aspartate 143 each contribute to the substrate site.

Belongs to the transferase hexapeptide repeat family. As to quaternary structure, homotrimer.

The protein localises to the cytoplasm. It carries out the reaction (S)-2,3,4,5-tetrahydrodipicolinate + succinyl-CoA + H2O = (S)-2-succinylamino-6-oxoheptanedioate + CoA. It functions in the pathway amino-acid biosynthesis; L-lysine biosynthesis via DAP pathway; LL-2,6-diaminopimelate from (S)-tetrahydrodipicolinate (succinylase route): step 1/3. This is 2,3,4,5-tetrahydropyridine-2,6-dicarboxylate N-succinyltransferase from Ralstonia nicotianae (strain ATCC BAA-1114 / GMI1000) (Ralstonia solanacearum).